A 357-amino-acid polypeptide reads, in one-letter code: Phospho-N-acetylmuramoyl-pentapeptide-transferase (357 aa).

The next 10 helical transmembrane spans lie at 4-24, 52-72, 77-97, 115-135, 153-173, 186-206, 228-248, 255-275, 280-300, and 334-354; these read QILFSGVIGLFLTLVGTPLLI, TMGGIAFILATIIAYFMSKVI, PTFSGLLVLGLMAGMGLVGFL, AKMAGQLIVGIAFAVLALQFA, FGWTIGPVLFVIWALFMILAM, LATGAATMVFGAYTFIGVWQF, PLDLAVVASALMGACFGFLWW, IFMGDTGSLALGGALAGLAIC, LLVALLGGLFVLITMSVVIQV, and FWIIQGMCVIVGLGLFYAGWA.

It belongs to the glycosyltransferase 4 family. MraY subfamily. Mg(2+) is required as a cofactor.

The protein localises to the cell membrane. It catalyses the reaction UDP-N-acetyl-alpha-D-muramoyl-L-alanyl-gamma-D-glutamyl-meso-2,6-diaminopimeloyl-D-alanyl-D-alanine + di-trans,octa-cis-undecaprenyl phosphate = di-trans,octa-cis-undecaprenyl diphospho-N-acetyl-alpha-D-muramoyl-L-alanyl-D-glutamyl-meso-2,6-diaminopimeloyl-D-alanyl-D-alanine + UMP. It functions in the pathway cell wall biogenesis; peptidoglycan biosynthesis. Its function is as follows. Catalyzes the initial step of the lipid cycle reactions in the biosynthesis of the cell wall peptidoglycan: transfers peptidoglycan precursor phospho-MurNAc-pentapeptide from UDP-MurNAc-pentapeptide onto the lipid carrier undecaprenyl phosphate, yielding undecaprenyl-pyrophosphoryl-MurNAc-pentapeptide, known as lipid I. In Streptomyces avermitilis (strain ATCC 31267 / DSM 46492 / JCM 5070 / NBRC 14893 / NCIMB 12804 / NRRL 8165 / MA-4680), this protein is Phospho-N-acetylmuramoyl-pentapeptide-transferase.